We begin with the raw amino-acid sequence, 54 residues long: Light-harvesting protein B-880 beta chain (54 aa).

At 1-20 (AEDRSSLSGVSDAEAKEFHA) the chain is on the cytoplasmic side. A bacteriochlorophyll is bound by residues H19 and H37. The helical transmembrane segment at 21-43 (LFVSSFTAFIVIAVLAHVLAWAW) threads the bilayer. At 44–54 (RPWIPGPKGWA) the chain is on the periplasmic side.

It belongs to the antenna complex beta subunit family. As to quaternary structure, the core complex is formed by different alpha and beta chains, binding bacteriochlorophyll molecules, and arranged most probably in tetrameric structures disposed around the reaction center. The non-pigmented gamma chains may constitute additional components.

It is found in the cell inner membrane. Functionally, antenna complexes are light-harvesting systems, which transfer the excitation energy to the reaction centers. The chain is Light-harvesting protein B-880 beta chain from Rhodoblastus acidophilus (Rhodopseudomonas acidophila).